Reading from the N-terminus, the 921-residue chain is Protein translocase subunit SecA (921 aa).

Residues Q87, 105 to 109 (GEGKT), and D515 contribute to the ATP site. The segment at 872-901 (DMEVAGSTGDRGAALDIQPAPVRSGPKIGR) is disordered. C905, C907, C916, and C917 together coordinate Zn(2+).

This sequence belongs to the SecA family. As to quaternary structure, monomer and homodimer. Part of the essential Sec protein translocation apparatus which comprises SecA, SecYEG and auxiliary proteins SecDF-YajC and YidC. It depends on Zn(2+) as a cofactor.

The protein localises to the cell inner membrane. Its subcellular location is the cytoplasm. The catalysed reaction is ATP + H2O + cellular proteinSide 1 = ADP + phosphate + cellular proteinSide 2.. Part of the Sec protein translocase complex. Interacts with the SecYEG preprotein conducting channel. Has a central role in coupling the hydrolysis of ATP to the transfer of proteins into and across the cell membrane, serving both as a receptor for the preprotein-SecB complex and as an ATP-driven molecular motor driving the stepwise translocation of polypeptide chains across the membrane. The protein is Protein translocase subunit SecA of Polynucleobacter asymbioticus (strain DSM 18221 / CIP 109841 / QLW-P1DMWA-1) (Polynucleobacter necessarius subsp. asymbioticus).